The sequence spans 460 residues: Asparagine--tRNA ligase (460 aa).

It belongs to the class-II aminoacyl-tRNA synthetase family. Homodimer.

It localises to the cytoplasm. It catalyses the reaction tRNA(Asn) + L-asparagine + ATP = L-asparaginyl-tRNA(Asn) + AMP + diphosphate + H(+). This is Asparagine--tRNA ligase from Picosynechococcus sp. (strain ATCC 27264 / PCC 7002 / PR-6) (Agmenellum quadruplicatum).